The primary structure comprises 554 residues: Putative mediator of RNA polymerase II transcription subunit 29 (554 aa).

4 disordered regions span residues 118–301 (DNKA…NTEA), 330–381 (QQQQ…PLPQ), 398–428 (LENQ…LQLQ), and 483–524 (NTNL…DDNT). Residues 122 to 210 (NTNNNNNNNN…NNSINNNSNN (89 aa)) are compositionally biased toward low complexity. Positions 167 to 194 (NNNNNNNYNNNNNNNNNNNNNNNNNNNN) form a coiled coil. Over residues 211–225 (KVGSNDNPSTAPITE) the composition is skewed to polar residues. A compositionally biased stretch (low complexity) spans 226 to 264 (NNTENNAGNTNNTNNNNNNNNNNNNNNNNNNNNNNNNTN). The span at 265-300 (QVAESSNISSNTTPPETTNIVNDPNSVSGGNLTNTE) shows a compositional bias: polar residues. Composition is skewed to low complexity over residues 330–374 (QQQQ…QQPQ), 419–428 (QQQQEQLQLQ), and 483–517 (NTNL…PEIN). The stretch at 419-486 (QQQQEQLQLQ…SLENQINTNL (68 aa)) forms a coiled coil.

Belongs to the Mediator complex subunit 29 family. In terms of assembly, component of the Mediator complex.

The protein localises to the nucleus. Functionally, component of the Mediator complex, a coactivator involved in the regulated transcription of nearly all RNA polymerase II-dependent genes. Mediator functions as a bridge to convey information from gene-specific regulatory proteins to the basal RNA polymerase II transcription machinery. Mediator is recruited to promoters by direct interactions with regulatory proteins and serves as a scaffold for the assembly of a functional preinitiation complex with RNA polymerase II and the general transcription factors. In Dictyostelium discoideum (Social amoeba), this protein is Putative mediator of RNA polymerase II transcription subunit 29 (med29).